We begin with the raw amino-acid sequence, 712 residues long: Golgin candidate 3 (712 aa).

The interval 23-49 (DEEEDDLHKYGSANGVSNSDRRNSSGF) is disordered. Polar residues predominate over residues 36–49 (NGVSNSDRRNSSGF). A coiled-coil region spans residues 65–134 (AHHEIERYKA…LKEARTDISR (70 aa)). A compositionally biased stretch (polar residues) spans 135 to 150 (GSNNYAIKGNNDQSPN). 2 disordered regions span residues 135-176 (GSNN…TDSF) and 306-347 (ESRK…MEQS). 3 coiled-coil regions span residues 197-313 (QATE…LTNS), 340-558 (GKEE…LNRM), and 659-690 (LKDAEERERREAEEAAASKAKQDSERTRQEAA). Residues 328 to 344 (STLDKEKPESFPGKEEM) show a composition bias toward basic and acidic residues. The 52-residue stretch at 557–608 (RMSMESDYLVDRRIVIKLLVTYFQKNHNKEVLDLMVRMLGFSEEDKERIGAA) folds into the GRIP domain. Positions 666–712 (ERREAEEAAASKAKQDSERTRQEAALHDSEFSTVPLRSSESNQRLSR) are disordered. The span at 678-695 (AKQDSERTRQEAALHDSE) shows a compositional bias: basic and acidic residues. Polar residues predominate over residues 696–712 (FSTVPLRSSESNQRLSR).

In terms of assembly, interacts with ARF1; preferentially with the active form of the protein.

It localises to the golgi apparatus. It is found in the endosome. Golgi matrix protein playing a role in tethering of vesicles to Golgi membranes and in maintaining the overall structure of the Golgi apparatus. This chain is Golgin candidate 3 (GC3), found in Arabidopsis thaliana (Mouse-ear cress).